The sequence spans 269 residues: Aquaporin-1 (269 aa).

Residues M1 to W11 lie on the Cytoplasmic side of the membrane. A helical transmembrane segment spans residues R12–I29. Topologically, residues G30 to V46 are extracellular. N42 carries an N-linked (GlcNAc...) asparagine glycan. Residues Q47–Q65 traverse the membrane as a helical segment. Residues S66–G68 lie on the Cytoplasmic side of the membrane. Residues H69 to G82 lie within the membrane without spanning it. The NPA 1 motif lies at N76–A78. Residues L83–S90 are Cytoplasmic-facing. The helical transmembrane segment at I91 to S109 threads the bilayer. Topologically, residues A110–V133 are extracellular. A helical membrane pass occupies residues N134–V153. Over L154–D163 the chain is Cytoplasmic. A helical membrane pass occupies residues L164 to L181. Residues L182–Y186 lie on the Extracellular side of the membrane. An intramembrane segment occupies T187–S199. Residues N192 to A194 carry the NPA 2 motif. Topologically, residues A200–F206 are extracellular. N-linked (GlcNAc...) asparagine glycosylation occurs at N205. The chain crosses the membrane as a helical span at residues S207–V224. Residues L225–K269 are Cytoplasmic-facing. The residue at position 247 (S247) is a Phosphoserine. Residue Y253 is modified to Phosphotyrosine. S262 carries the phosphoserine modification.

Belongs to the MIP/aquaporin (TC 1.A.8) family. In terms of assembly, homotetramer; each monomer provides an independent water pore. Component of the ankyrin-1 complex in the erythrocyte, composed of ANK1, RHCE, RHAG, SLC4A1, EPB42, GYPA, GYPB and AQP1. Interacts with EPHB2; involved in endolymph production in the inner ear. Identified in a complex with STOM. Interacts (via the N-terminal) with ANK1 (via ANK 1-5 repeats). Interacts (via the C-terminal) with EPB42. Erythrocytes and renal tubules.

It localises to the cell membrane. It catalyses the reaction H2O(in) = H2O(out). The enzyme catalyses nitric oxide(out) = nitric oxide(in). The catalysed reaction is CO2(out) = CO2(in). It carries out the reaction glycerol(in) = glycerol(out). It catalyses the reaction H2O2(out) = H2O2(in). The enzyme catalyses K(+)(in) = K(+)(out). The catalysed reaction is Na(+)(in) = Na(+)(out). Functionally, forms a water channel that facilitates the transport of water across cell membranes, playing a crucial role in water homeostasis in various tissues. Could also be permeable to small solutes including hydrogen peroxide, glycerol and gases such as amonnia (NH3), nitric oxide (NO) and carbon dioxide (CO2). Recruited to the ankyrin-1 complex, a multiprotein complex of the erythrocyte membrane, it could be part of a CO2 metabolon, linking facilitated diffusion of CO2 across the membrane, anion exchange of Cl(-)/HCO3(-) and interconversion of dissolved CO2 and carbonic acid in the cytosol. In vitro, it shows non-selective gated cation channel activity and may be permeable to cations like K(+) and Na(+) in vivo. In Rattus norvegicus (Rat), this protein is Aquaporin-1.